A 757-amino-acid chain; its full sequence is MDVNPTLLFLKVPVQNAISTTFPYTGDPPYSHGTGTGYTMDTVNRTHQYSEKGKWTTNTETGAPQLNPIDGPLPEDNEPSGYAQTDCVLEAMAFLEESHPGIFENSCLETMEIVQQTRVDKLTQGRQTYDWTLNRNQPAATALANTIEIFRSNGLTANESGRLIDFLKDVMESMDKEEMEITTHFQRKRRVRDNMTKKMVTQRTIGKKKQRLNKKSYLIRALTLNTMTKDAERGKLKRRAIATPGMQIRGFVYFVETLARGICEKLEQSGLPVGGNEKKAKLANVVRKMMTNSQDTELSFTITGDNTKWNENQNPRMFLAMITYITRNQPEWFRNVLSIAPIMFSNKMARLGKGYMFESKSMKLRTQIPAEMLANIDLKYFNELTKKKIEKIRPLLIDGTASLSPGMMMGMFNMLSTVLGVSILNLGQKRYTKTTYWWDGLQSSDDFALIVNAPNHEGIQAGVDRFYRTCKLVGINMSKKKSYINRTGTFEFTSFFYRYGFVANFSMELPSFGVSGINESADMSIGVTVIKNNMINNDLGPATAQMALQLFIKDYRYTYRCHRGDSQIQTRRSFELKKLWEQTRSKAGLLVSDGGPNLYNIRNLHIPEVCLKWELMDEDYQGRLCNPLNPFVSHKEIESVNNTVVMPAHGPAKSMEYDAVATTHSWIPKRNRSILNTSQRGILEDEQMYQKCCNLFEKFFPSSSYRRPVGISSMVEAMVSRARIDARIDFESGRIKKEEFAEIMKICSTIEELRRQK.

The tract at residues 52-82 (KGKWTTNTETGAPQLNPIDGPLPEDNEPSGY) is disordered. The segment covering 55–64 (WTTNTETGAP) has biased composition (polar residues). Short sequence motifs (nuclear localization signal) lie at residues 187–195 (RKRRVRDNM) and 203–216 (RTIG…NKKS). The promoter-binding site stretch occupies residues 249–256 (RGFVYFVE). The RdRp catalytic domain maps to 286-483 (VRKMMTNSQD…GINMSKKKSY (198 aa)).

The protein belongs to the influenza viruses polymerase PB1 family. In terms of assembly, influenza RNA polymerase is composed of three subunits: PB1, PB2 and PA. Interacts (via N-terminus) with PA (via C-terminus). Interacts (via C-terminus) with PB2 (via N-terminus); this interaction is essential for transcription initiation. In terms of processing, phosphorylated by host PRKCA.

It is found in the host nucleus. The protein resides in the host cytoplasm. It carries out the reaction RNA(n) + a ribonucleoside 5'-triphosphate = RNA(n+1) + diphosphate. Functionally, RNA-dependent RNA polymerase which is responsible for replication and transcription of virus RNA segments. The transcription of viral mRNAs occurs by a unique mechanism called cap-snatching. 5' methylated caps of cellular mRNAs are cleaved after 10-13 nucleotides by PA. In turn, these short capped RNAs are used as primers by PB1 for transcription of viral mRNAs. During virus replication, PB1 initiates RNA synthesis and copy vRNA into complementary RNA (cRNA) which in turn serves as a template for the production of more vRNAs. The sequence is that of RNA-directed RNA polymerase catalytic subunit from Influenza A virus (strain A/Chicken/Shantou/4231/2003 H5N1 genotype V).